The chain runs to 345 residues: Heat stress transcription factor A-4c (345 aa).

A DNA-binding region spans residues 11–105 (LPPFLTKTYE…LMKNIHRRKP (95 aa)). The interval 119–185 (PLTESERRSM…SIVAYVSQVL (67 aa)) is hydrophobic repeat HR-A/B. The Nuclear localization signal motif lies at 199–203 (RRKRR). The AHA1 signature appears at 226 to 235 (LTFWENLVSE). Residues 240-329 (SGLQSSSMDH…NGNKIGNQRT (90 aa)) are disordered. A compositionally biased stretch (low complexity) spans 274–283 (PPVTVTAPAP). The AHA2 motif lies at 289–298 (DDFWEQCLTE). Polar residues-rich tracts occupy residues 296–308 (LTEN…QQEV) and 317–329 (NDNN…NQRT).

The protein belongs to the HSF family. Class A subfamily. Homotrimer. Exhibits temperature-dependent phosphorylation. Expressed in roots, seedlings and at lower levels in leaves.

The protein resides in the nucleus. Its function is as follows. Transcriptional activator that specifically binds DNA sequence 5'-AGAAnnTTCT-3' known as heat shock promoter elements (HSE). May be involved in general response to auxin. This is Heat stress transcription factor A-4c (HSFA4C) from Arabidopsis thaliana (Mouse-ear cress).